We begin with the raw amino-acid sequence, 1007 residues long: Serine/threonine-protein kinase PRP4 homolog (1007 aa).

The disordered stretch occupies residues 1 to 102 (MAATEPPSLR…LSPAKRTKLD (102 aa)). Residue A2 is modified to N-acetylalanine. Phosphoserine occurs at positions 8, 21, 24, and 33. 2 stretches are compositionally biased toward basic residues: residues 40–60 (KHSR…KHKH) and 68–82 (KKHK…HKRK). Positions 83-92 (EVIEASDKEG) are enriched in basic and acidic residues. Phosphoserine occurs at positions 88 and 94. K100 is modified (N6-acetyllysine; alternate). K100 participates in a covalent cross-link: Glycyl lysine isopeptide (Lys-Gly) (interchain with G-Cter in SUMO2); alternate. K112 participates in a covalent cross-link: Glycyl lysine isopeptide (Lys-Gly) (interchain with G-Cter in SUMO2). K118 participates in a covalent cross-link: Glycyl lysine isopeptide (Lys-Gly) (interchain with G-Cter in SUMO2); alternate. Residue K118 forms a Glycyl lysine isopeptide (Lys-Gly) (interchain with G-Cter in SUMO1); alternate linkage. S132 is subject to Phosphoserine. Y141 carries the phosphotyrosine modification. Disordered stretches follow at residues 141-535 (YESG…EDEE) and 560-583 (NISV…SPDD). 3 positions are modified to phosphoserine: S143, S145, and S167. The span at 158–169 (GNRSSTRSSSTR) shows a compositional bias: low complexity. Glycyl lysine isopeptide (Lys-Gly) (interchain with G-Cter in SUMO2) cross-links involve residues K171 and K178. Composition is skewed to basic residues over residues 180 to 203 (SAKK…RKSK) and 215 to 231 (RSKS…SKRS). Residues S240, S242, S258, S278, S292, and S294 each carry the phosphoserine modification. The segment covering 248–271 (RSQEKVGKARSPAEEKMKSEEKGK) has biased composition (basic and acidic residues). Positions 294–303 (SPVDLRDKSK) are enriched in basic and acidic residues. Residues 304-315 (DRRSRSKERKSK) are compositionally biased toward basic residues. Residues 316–325 (RSEIDKEKKP) show a composition bias toward basic and acidic residues. Phosphoserine is present on residues S328, S354, S356, S366, and S368. Residues 342–367 (PSRRPGRSPKRRSLSPKLRDKSRRSR) are compositionally biased toward basic residues. T385 is subject to Phosphothreonine. A Phosphoserine modification is found at S387. Basic and acidic residues-rich tracts occupy residues 395-408 (RSLE…ERRR) and 415-429 (RPRD…RSKD). Phosphoserine occurs at positions 427, 431, and 437. Residues 438–497 (PTRRRSRSPIRRRSRSPLRRSRSPRRRSRSPRRRDRSRRSRSRLRRRSRSRGGHRRRSRS) show a composition bias toward basic residues. 8 positions are modified to phosphoserine: S518, S519, S520, S565, S569, S576, S578, and S580. A compositionally biased stretch (acidic residues) spans 518–535 (SSSDDNLEDFDVEEEDEE). Residues 562-581 (SVPSEPSSPQSSTRSRSPSP) show a composition bias toward low complexity. Residues K593 and K659 each participate in a glycyl lysine isopeptide (Lys-Gly) (interchain with G-Cter in SUMO2) cross-link. In terms of domain architecture, Protein kinase spans 687-1006 (YNVYGYTGQG…ALQHAFIQEK (320 aa)). Residues 693-701 (TGQGVFSNV) and K717 each bind ATP. Residue K717 is modified to N6-acetyllysine. The active-site Proton acceptor is D815. Y849 carries the phosphotyrosine modification. S852 is modified (phosphoserine).

This sequence belongs to the protein kinase superfamily. CMGC Ser/Thr protein kinase family. Interacts with CLK1 C-terminus. Associates with the U5 snRNP and NCOR1 deacetylase complexes. Identified in the spliceosome C complex. In terms of processing, phosphorylated by CLK1. Autophosphorylated; phosphorylation inhibits interaction with its targets, such as PRPF6 or SMARCA4.

Its subcellular location is the nucleus. It is found in the chromosome. The protein localises to the centromere. It localises to the kinetochore. The catalysed reaction is L-seryl-[protein] + ATP = O-phospho-L-seryl-[protein] + ADP + H(+). The enzyme catalyses L-threonyl-[protein] + ATP = O-phospho-L-threonyl-[protein] + ADP + H(+). Its function is as follows. Serine/threonine kinase involved in spliceosomal assembly as well as mitosis and signaling regulation. Connects chromatin mediated regulation of transcription and pre-mRNA splicing. During spliceosomal assembly, interacts with and phosphorylates PRPF6 and PRPF31, components of the U4/U6-U5 tri-small nuclear ribonucleoprotein (snRNP), to facilitate the formation of the spliceosome B complex. Plays a role in regulating transcription and the spindle assembly checkpoint (SAC). Associates with U5 snRNP and NCOR1 deacetylase complexes which may allow a coordination of pre-mRNA splicing with chromatin remodeling events involved in transcriptional regulation. Associates and probably phosphorylates SMARCA4 and NCOR1. Phosphorylates SRSF1. Associates with kinetochores during mitosis and is necessary for recruitment and maintenance of the checkpoint proteins such as MAD1L1 and MAD12L1 at the kinetochores. Phosphorylates and regulates the activity of the transcription factors such as ELK1 and KLF13. Phosphorylates nuclear YAP1 and WWTR1/TAZ which induces nuclear exclusion and regulates Hippo signaling pathway, involved in tissue growth control. This Mus musculus (Mouse) protein is Serine/threonine-protein kinase PRP4 homolog (Prp4k).